The sequence spans 81 residues: U-megalopygitoxin(3)-Mo4 (81 aa).

Residues 1-20 form the signal peptide; it reads MNSKFVLIVVFLAVVSICFA.

This sequence belongs to the caterpillar 3 family. In terms of processing, contains 3 disulfide bonds. Expressed by the venom apparatus.

It is found in the secreted. Probable toxin. The sequence is that of U-megalopygitoxin(3)-Mo4 from Megalopyge opercularis (Southern flannel moth).